Reading from the N-terminus, the 687-residue chain is Phenylalanine aminomutase (L-beta-phenylalanine forming) (687 aa).

Tyr80 acts as the Proton donor/acceptor in catalysis. Positions 175-177 (ASG) form a cross-link, 5-imidazolinone (Ala-Gly). Ser176 carries the 2,3-didehydroalanine (Ser) modification. 7 residues coordinate (E)-cinnamate: Asn231, Gln319, Arg325, Asn355, Lys427, Glu455, and Asn458.

This sequence belongs to the PAL/histidase family. As to quaternary structure, homodimer. Homotetramer, dimer of dimers. Contains an active site 4-methylidene-imidazol-5-one (MIO), which is formed autocatalytically by cyclization and dehydration of residues Ala-Ser-Gly.

The protein localises to the cytoplasm. It catalyses the reaction L-phenylalanine = L-beta-phenylalanine. The enzyme catalyses L-phenylalanine = (E)-cinnamate + NH4(+). It participates in alkaloid biosynthesis; taxol biosynthesis. The protein operates within phenylpropanoid metabolism; trans-cinnamate biosynthesis; trans-cinnamate from L-phenylalanine: step 1/1. In terms of biological role, phenylalanine aminomutase that catalyzes the rearrangement of L-phenylalanine to R-beta-phenylalanine. Catalyzes the first committed step in the biosynthesis of the side chain of the alkaloid taxol (paclitaxel), a widely-used compound with antitumor activity. Also has low phenylalanine ammonia-lyase activity and can catalyze the amination of trans-cinnamate. The polypeptide is Phenylalanine aminomutase (L-beta-phenylalanine forming) (pam) (Taxus chinensis (Chinese yew)).